The following is a 523-amino-acid chain: Keratin, type II cytoskeletal 71 (523 aa).

A head region spans residues 1 to 129 (MSRQFTCKSG…DPEIQKVRAQ (129 aa)). The coil 1A stretch occupies residues 130-165 (EREQIKALNNKFASFIDKVRFLEQQNQVLETKWELL). The IF rod domain maps to 130–443 (EREQIKALNN…KLLESEECRM (314 aa)). Residues 166-184 (QQLDLNNCKNNLEPILEGY) are linker 1. Residues 185 to 276 (ISNLRKQLET…CLFEAEITQI (92 aa)) form a coil 1B region. Residues 277–300 (QSHISDMSVILSMDNNRNLDLDSI) form a linker 12 region. The tract at residues 301-439 (IDEVRTQYEE…ATYRKLLESE (139 aa)) is coil 2. The tail stretch occupies residues 440–523 (ECRMSGEFPS…LSAPSKKTSR (84 aa)). Residues 492–523 (GGEGRSRGSANDYKDTLGKGSSLSAPSKKTSR) form a disordered region. Basic and acidic residues predominate over residues 493-508 (GEGRSRGSANDYKDTL). Polar residues predominate over residues 510-523 (KGSSLSAPSKKTSR).

This sequence belongs to the intermediate filament family. As to quaternary structure, heterodimer of a type I and a type II keratin. Associates with KRT16 and/or KRT17. Highly expressed in hair follicles from scalp. Specifically expressed in the inner root sheath (IRS) of the hair follicle. Present in the all 3 IRS layers: the cuticle, the Henle and the Huxley layers. Also detected in the pseudopods of specialized Huxley cells, termed Fluegelzellen, along the area of differentiated Henle cells (at protein level).

It localises to the cytoplasm. It is found in the cytoskeleton. Functionally, plays a central role in hair formation. Essential component of keratin intermediate filaments in the inner root sheath (IRS) of the hair follicle. This chain is Keratin, type II cytoskeletal 71 (KRT71), found in Homo sapiens (Human).